The primary structure comprises 311 residues: Formimidoylglutamase (311 aa).

Mn(2+)-binding residues include His130, Asp155, His157, Asp159, Cys242, and Asp244.

This sequence belongs to the arginase family. Requires Mn(2+) as cofactor.

It carries out the reaction N-formimidoyl-L-glutamate + H2O = formamide + L-glutamate. It functions in the pathway amino-acid degradation; L-histidine degradation into L-glutamate; L-glutamate from N-formimidoyl-L-glutamate (hydrolase route): step 1/1. In terms of biological role, catalyzes the conversion of N-formimidoyl-L-glutamate to L-glutamate and formamide. The protein is Formimidoylglutamase of Staphylococcus aureus (strain Mu3 / ATCC 700698).